The chain runs to 184 residues: Zinc metalloproteinase-disintegrin-like ammodytagin (184 aa).

One can recognise a Peptidase M12B domain in the interval 1–90 (KSAAXVTLDL…CPAKCIDNKP (90 aa)). Ca(2+) is bound at residue Asp20. Residue His64 coordinates Zn(2+). Residue Glu65 is part of the active site. Zn(2+) contacts are provided by His68 and His74. Ca(2+)-binding residues include Asn88, Val100, Asn103, Phe105, and Glu107. Positions 98 to 124 (PAVCGNYFVELTPGSQCADGVCCDQCR) constitute a Disintegrin domain. 2 disulfide bridges follow: Cys114–Cys120 and Cys165–Cys177.

The protein belongs to the venom metalloproteinase (M12B) family. P-III subfamily. P-IIIc sub-subfamily. In terms of assembly, heterodimer; disulfide-linked. The cofactor is Zn(2+). In terms of processing, the N-terminus is blocked. N-glycosylated. As to expression, expressed by the venom gland.

Its subcellular location is the secreted. Its activity is regulated as follows. Inhibited by EDTA, DTT and zinc ions. Partially inhibited by L-cysteine. Not inhibited by 2-propanol or PMSF. Activity is enhanced by calcium or magnesium ions. In terms of biological role, snake venom zinc metalloprotease that has fibrinogenolytic and hemorrhagic activities in mouse and rats. Hydrolyzes the Aalpha-chain (FGA) and more slowly the Bbeta-chain of fibrinogen (FGB), without affecting the gamma-chain. Its hemorrhagic activity results of its involvement in cleavage of basal membrane components (nidogen and fibronectin but not laminin) and depletion of fibrinogen, prothrombin (F2) and factor X (F10) in blood circulation. Also possess potent azocaseinolytic activity and cleaves insulin B-chain, hydrolyzing it at positions Gln(4)-His(5), His(10)-Leu(11) and Tyr(16)-Leu(17). The protein is Zinc metalloproteinase-disintegrin-like ammodytagin of Vipera ammodytes ammodytes (Western sand viper).